Here is a 73-residue protein sequence, read N- to C-terminus: Sec-independent protein translocase protein TatA (73 aa).

Residues 1-21 (MGSFSIWHWLIVLVIVMLVFG) traverse the membrane as a helical segment. The disordered stretch occupies residues 50 to 73 (KEQIQQSSATAEKTVDVQAKDVNK). The span at 62–73 (KTVDVQAKDVNK) shows a compositional bias: basic and acidic residues.

Belongs to the TatA/E family. As to quaternary structure, the Tat system comprises two distinct complexes: a TatABC complex, containing multiple copies of TatA, TatB and TatC subunits, and a separate TatA complex, containing only TatA subunits. Substrates initially bind to the TatABC complex, which probably triggers association of the separate TatA complex to form the active translocon.

Its subcellular location is the cell inner membrane. Functionally, part of the twin-arginine translocation (Tat) system that transports large folded proteins containing a characteristic twin-arginine motif in their signal peptide across membranes. TatA could form the protein-conducting channel of the Tat system. The chain is Sec-independent protein translocase protein TatA from Polynucleobacter necessarius subsp. necessarius (strain STIR1).